The primary structure comprises 284 residues: RNase adapter protein RapZ (284 aa).

8–15 (GRSGSGKS) lines the ATP pocket. 56 to 59 (DVRN) is a GTP binding site. Residues 266 to 284 (RSRGKNVQLRHRTLEKRKE) form an RNA-binding region.

This sequence belongs to the RapZ-like family. RapZ subfamily. As to quaternary structure, homotrimer.

Functionally, modulates the synthesis of GlmS, by affecting the processing and stability of the regulatory small RNA GlmZ. When glucosamine-6-phosphate (GlcN6P) concentrations are high in the cell, RapZ binds GlmZ and targets it to cleavage by RNase E. Consequently, GlmZ is inactivated and unable to activate GlmS synthesis. Under low GlcN6P concentrations, RapZ is sequestered and inactivated by an other regulatory small RNA, GlmY, preventing GlmZ degradation and leading to synthesis of GlmS. This chain is RNase adapter protein RapZ, found in Hamiltonella defensa subsp. Acyrthosiphon pisum (strain 5AT).